Consider the following 104-residue polypeptide: MAWIILVIAGLLEVIWAIGLKYSHGFSRLTPSIITLVAMAASVFLLAYAMKSLPAGTAYAVWTGIGAVGTAILGIVLLGESASLARILSLGLILAGIIGLKLAS.

Residue Met1 is a topological domain, cytoplasmic. Residues Ala2–Gly19 form a helical membrane-spanning segment. Residues Leu20 to Arg28 are Periplasmic-facing. The helical transmembrane segment at Leu29 to Tyr48 threads the bilayer. The Cytoplasmic segment spans residues Ala49 to Pro54. A helical membrane pass occupies residues Ala55–Leu77. At Leu78 to Ser81 the chain is on the periplasmic side. The chain crosses the membrane as a helical span at residues Ala82–Leu100. Over Lys101–Ser104 the chain is Cytoplasmic.

This sequence belongs to the drug/metabolite transporter (DMT) superfamily. Small multidrug resistance (SMR) (TC 2.A.7.1) family. Gdx/SugE subfamily.

It localises to the cell inner membrane. Its function is as follows. Guanidinium ion exporter. Couples guanidinium export to the proton motive force, exchanging one guanidinium ion for two protons. This is Guanidinium exporter from Yersinia pestis.